Reading from the N-terminus, the 854-residue chain is Protein unc-33 (854 aa).

3 disordered regions span residues 57–114, 130–327, and 794–854; these read ETVS…IPAP, ELFG…DGNG, and VERV…TGFW. Polar residues-rich tracts occupy residues 58–68 and 75–97; these read TVSNKSRSSEG and RPNSRSSAIVKKTSVSSLPTSAR. Residues 193–202 show a composition bias toward basic and acidic residues; that stretch reads KVLRGEKSTP. Over residues 240-257 the composition is skewed to acidic residues; the sequence is VDDEEEPEAEAQEMEEPQ. Residues 279-298 show a composition bias toward basic and acidic residues; that stretch reads HPSEDGDSTRNGETPTDRRN. Polar residues predominate over residues 802 to 811; sequence SSQQQKPQQN. Positions 816-827 are enriched in basic and acidic residues; it reads NSGDFDRNRTKV.

It belongs to the metallo-dependent hydrolases superfamily. Hydantoinase/dihydropyrimidinase family. As to quaternary structure, isoform a: Probable monomer. Isoform b: Probable homodimer. Isoform c: Probable homodimer. Probable heterodimer composed of isoform b and isoform c. Interacts with unc-14 and kinesin-1 motor complex light chain klc-1; both interactions regulate unc-33 neurite localization. Interacts with fln-1 (via calponin-homology (CH) domains and filamin repeat 18-19). Isoform c: Interacts with vab-8 isoform a. In terms of tissue distribution, expressed in ventral cord and nerve ring (at protein level). Isoform a: Expressed in nerve ring (at protein level). Expressed in the nervous system, two amphid socket cells and weakly in non-neuronal pharyngeal cells.

The protein resides in the cell projection. The protein localises to the axon. It is found in the dendrite. Its function is as follows. During neurogenesis, plays an essential role in axonal guidance and outgrowth by regulating the polarization of both microtubule and actin cytoskeletons. Establishes the asymmetry of axonal and dendrite microtubules and the polarized sorting of neuronal proteins. This is achieved in part by regulating the localization of kinesin-like protein unc-104. In neurons without a distal microtubule-organizing center (MTOC), also controls the organization of microtubules in dendrites. During the dorso-ventral axonal guidance and outgrowth of VD neurons, required downstream of Rac GTPases ced-10 and mig-2 to inhibit growth cone filopodial protrusion mediated by the unc-6/netrin receptor unc-40-unc-5. Specifically, regulates growth cone filopodial protrusion polarity, and thus migration, by promoting F-actin polarization and by restricting plus-end microtubule accumulation in the growth cone. Probably downstream of mab-20/Sema2a and mab-20 receptor plx-2, regulates the guidance of DD/VD neuron axons by modulating fln-1 interaction with F-actin which results in the remodeling of the actin cytoskeleton. In hermaphrodites, involved in sex myoblast (SM) migration by regulating the gonad-dependent repulsion of SMs. In neurons, required for the polarized sorting of axonal proteins. In PLM neuron, regulates innexin unc-9 gap junction turnover by suppressing unc-9 transport out of gap junctions. Plays a role in locomotion and egg-laying. Functionally, in PLM neuron, regulates innexin unc-9 gap junction turnover by suppressing unc-9 transport out of gap junctions. The polypeptide is Protein unc-33 (Caenorhabditis elegans).